The chain runs to 537 residues: Probable E3 ubiquitin-protein ligase ARI3 (537 aa).

The segment at 1–30 (MDDDYMMLDDDYGEEEDENYSEDDNYSEAE) is disordered. Residues 117–331 (KTMKCDVCME…IAGHSCGRYK (215 aa)) form a TRIAD supradomain region. Residues cysteine 121, cysteine 124, cysteine 139, histidine 141, cysteine 144, cysteine 147, cysteine 166, cysteine 171, cysteine 210, cysteine 216, cysteine 234, cysteine 236, cysteine 241, cysteine 244, histidine 249, cysteine 254, cysteine 281, and cysteine 284 each coordinate Zn(2+). The RING-type 1 zinc finger occupies 121-171 (CDVCMEDDLPSNVMTRMECGHRFCNDCWIGHFTVKINEGESKRILCMAHEC). The IBR-type zinc finger occupies 190 to 254 (DRYDRFLIES…LSESHSPCSC (65 aa)). The RING-type 2; atypical zinc finger occupies 281 to 309 (CPKCSKPIQKRDGCNLMTCKCGQHFCWLC). Residue cysteine 294 is part of the active site. Zn(2+) is bound by residues cysteine 299, cysteine 301, cysteine 306, cysteine 309, histidine 317, and cysteine 327.

Belongs to the RBR family. Ariadne subfamily. Zn(2+) is required as a cofactor. In terms of tissue distribution, ubiquitous.

The catalysed reaction is [E2 ubiquitin-conjugating enzyme]-S-ubiquitinyl-L-cysteine + [acceptor protein]-L-lysine = [E2 ubiquitin-conjugating enzyme]-L-cysteine + [acceptor protein]-N(6)-ubiquitinyl-L-lysine.. Its pathway is protein modification; protein ubiquitination. Its function is as follows. Might act as an E3 ubiquitin-protein ligase, or as part of E3 complex, which accepts ubiquitin from specific E2 ubiquitin-conjugating enzymes and then transfers it to substrates. The polypeptide is Probable E3 ubiquitin-protein ligase ARI3 (ARI3) (Arabidopsis thaliana (Mouse-ear cress)).